The chain runs to 212 residues: Uridine kinase (212 aa).

13-20 provides a ligand contact to ATP; the sequence is GASASGKS.

This sequence belongs to the uridine kinase family.

It localises to the cytoplasm. It catalyses the reaction uridine + ATP = UMP + ADP + H(+). The enzyme catalyses cytidine + ATP = CMP + ADP + H(+). The protein operates within pyrimidine metabolism; CTP biosynthesis via salvage pathway; CTP from cytidine: step 1/3. Its pathway is pyrimidine metabolism; UMP biosynthesis via salvage pathway; UMP from uridine: step 1/1. The protein is Uridine kinase of Shewanella baltica (strain OS155 / ATCC BAA-1091).